A 357-amino-acid chain; its full sequence is Velvet complex subunit 2 (357 aa).

The region spanning 32–341 (RRAERKYKLE…AQQGIKIPIR (310 aa)) is the Velvet domain.

This sequence belongs to the velvet family. VelB subfamily. Component of the heterotrimeric velvet complex composed of LAE1, VEL1 and VEL2; VEL1A acting as a bridging protein between LAE1 and VEL2. Forms a heterodimeric complex with VOS1; the formation of the VEL2-VOS1 complex is light-dependent.

It localises to the nucleus. The protein localises to the cytoplasm. Its function is as follows. Component of the velvet transcription factor complex that controls sexual/asexual developmental ratio in response to light, promoting sexual development in the darkness while stimulating asexual sporulation under illumination. The velvet complex acts as a global regulator for secondary metabolite gene expression. Component of the VEL2-VOS1 heterodimeric complex that plays a dual role in activating genes associated with spore maturation and repressing certain development-associated genes. The complex binds DNA through the DNA-binding domain of VOS1 that recognizes an 11-nucleotide consensus sequence 5'-CTGGCCGCGGC-3' consisting of two motifs in the promoters of key developmental regulatory genes. The VEL2-VOS1 complex is required for normal pseudothecium development and regulates asexual spore compartmentalization, pigmentation and germination. This Cochliobolus heterostrophus (strain C5 / ATCC 48332 / race O) (Southern corn leaf blight fungus) protein is Velvet complex subunit 2.